The sequence spans 183 residues: Ribosome rescue factor SmrB (183 aa).

In terms of domain architecture, Smr spans 98 to 173; it reads LDLHGLTQLQ…GDAALLVLIE (76 aa).

The protein belongs to the SmrB family. Associates with collided ribosomes, but not with correctly translating polysomes.

Its function is as follows. Acts as a ribosome collision sensor. Detects stalled/collided disomes (pairs of ribosomes where the leading ribosome is stalled and a second ribosome has collided with it) and endonucleolytically cleaves mRNA at the 5' boundary of the stalled ribosome. Stalled/collided disomes form a new interface (primarily via the 30S subunits) that binds SmrB. Cleaved mRNA becomes available for tmRNA ligation, leading to ribosomal subunit dissociation and rescue of stalled ribosomes. The chain is Ribosome rescue factor SmrB from Shigella dysenteriae serotype 1 (strain Sd197).